The sequence spans 818 residues: Beta-glucosidase (818 aa).

Aspartate 222 is a catalytic residue. The PA14 domain occupies 386-538 (VFSGEMTVEY…GDAGIAEAVE (153 aa)).

The protein belongs to the glycosyl hydrolase 3 family.

The protein resides in the cytoplasm. The catalysed reaction is Hydrolysis of terminal, non-reducing beta-D-glucosyl residues with release of beta-D-glucose.. Involved in modifying a vir-inducing plant signal molecule. Hydrolyzes coniferin but not cellobiose. This chain is Beta-glucosidase (cbg-1), found in Rhizobium radiobacter (Agrobacterium tumefaciens).